The following is a 367-amino-acid chain: Adenosine deaminase (367 aa).

Positions 46 and 48 each coordinate Zn(2+). A purine D-ribonucleoside-binding positions include 48–50, Asp-176, and Gly-205; that span reads HLD. The tract at residues 174-188 is gating helix loop; regulates binding affinity for substrates and thus substrate selectivity; it reads TGDGGLSHERMKEAA. His-230 serves as a coordination point for Zn(2+). Residues Glu-233, His-257, and Asp-314 each coordinate a purine D-ribonucleoside. Residue Asp-314 coordinates Zn(2+).

This sequence belongs to the metallo-dependent hydrolases superfamily. Adenosine and AMP deaminases family. It depends on Zn(2+) as a cofactor.

It catalyses the reaction adenosine + H2O + H(+) = inosine + NH4(+). The catalysed reaction is S-methyl-5'-thioadenosine + H2O + H(+) = S-methyl-5'-thioinosine + NH4(+). Its pathway is purine metabolism; purine nucleoside salvage. Inhibited by coformycin and methylthiocoformycin (MT-coformycin). In terms of biological role, catalyzes the hydrolytic deamination of adenosine to produce inosine. Unlike mammalian adenosine deaminases, also catalyzes the deamination of 5'-methylthioadenosine (MTA), a by-product of polyamine biosynthesis, to produce 5'-methylthioinosine (MTI). Plays an essential role in the purine salvage pathway which allows the parasite to use host cell purines for the synthesis of nucleic acids. The sequence is that of Adenosine deaminase from Plasmodium falciparum (isolate 3D7).